The chain runs to 232 residues: Large ribosomal subunit protein uL3 (232 aa).

The protein belongs to the universal ribosomal protein uL3 family. Part of the 50S ribosomal subunit. Forms a cluster with proteins L14 and L19.

In terms of biological role, one of the primary rRNA binding proteins, it binds directly near the 3'-end of the 23S rRNA, where it nucleates assembly of the 50S subunit. The polypeptide is Large ribosomal subunit protein uL3 (Sorangium cellulosum (strain So ce56) (Polyangium cellulosum (strain So ce56))).